A 1616-amino-acid polypeptide reads, in one-letter code: MAYTQTATTSALLDTVRGNNSLVNDLAKRRLYDTAVEEFNARDRRPKVNFSKVISEEQTLIATRAYPEFQITFYNTQNAVHSLAGGLRSLELEYLMMQIPYGSLTYDIGGNFASHLFKGRAYVHCCMPNLDVRDIMRHEGQKDSIELYLSRLERGGKTVPNFQKEAFDRYAEIPEDAVCHNTFQTCEHQPMQQSGRVYAIALHSIYDIPADEFGAALLRKNVHTCYAAFHFSENLLLEDSYVNLDEINACFSRDGDKLTFSFASESTLNYCHSYSNILKYVCKTYFPASNREVYMKEFLVTRVNTWFCKFSRIDTFLLYKGVAHKSVDSEQFYTAMEDAWHYKKTLAMCNSERILLEDSSSVNYWFPKMRDMVIVPLFDISLETSKRTRKEVLVSKDFVFTVLNHIRTYQAKALTYANVLSFVESIRSRVIINGVTARSEWDVDKSLLQSLSMTFYLHTKLAVLKDDLLISKFSLGSKTVCQHVWDEISLAFGNAFPSVKERLLNRKLIRVAGDALEIRVPDLYVTFHDRLVTEYKASVDMPALDIRKKMEETEVMYNALSELSVLRESDKFDVDVFSQMCKSLEVDPMTAAKVIVADMSNESGLTLTFERPTEANVALALQDQEKASEGALVVTSREVEEPSMKGSMARGELQLAGLAGDHPESSYSKNEEIESLEQFHMATADSLIRKQMSSIVYTGPIKVQQMKNFIDSLVASLSAAVSNLVKILKDTAAIDLETRQKFGVLDVASRKWLIKPTAKSHAWGVVETHARKYHVALLEYDEQGVVTCDDWRRVAVSSESVVYSDMAKLRTLRRLLRNGEPHVSSAKVVLVDGVPGCGKTKEILSRVNFDEDLILVPGKQAAEMIRRRANSSGIIVATKDNVKTVDSFMMNFGKSTRCQFKRLFIDEGLMLHTGCVNFLVAMSLCEIAYVYGDTQQIPYINRVSGFPYPAHFAKLEVDEVETRRTTLRCPADVTHYLNRRYEGFVMSTSSVKKSVSQEMVGGAAVINPISKPSHGKILTFTQSDKEALLSRGYSDVHTVHEVQGETYSDVSLVRLTPTPVSIIAGDSPHVLVALSRHTCSLKYYTVVMDPLVSIIRDLEKLSSYLSDMYKVDAGTQXQLQIDSVFKGSNLFVAAPKTGDISDMQFYYDKCLPGNSTMMNNFDAVTMRLTDISLNVKDCILDMSKSVAAPKDQIKPLIPMVRTAAEMPRQTGLLENLVAMIKRNFNAPELSGIIDIENTASLVVDKFFDSYLLKEKRKPNKNVSLFSRESLNRWLEKQEQVTIGQLADFDFVDLPAVDQYRHMIKAQPKQKLDTSIQTEYPALQTIVYHSKKISAIFGPLFSELTRQLLDSVDSSRFLFFTRKTPAQIEDFFGDLDSHVPMDVLELDISKYDKSQNEFHCAVEYEIWRRLGFEDFLGEVWKQGHRKTTLKDYTAGIKTCIWYQRKSGDVTTFIGNTVIIAACLASMLPMEKIIKGAFCGDDSLLYFPKGCEFPDVQHSANLMWNFEAKLFKKQYGYFCGRYVIHHDRGCIVYYDPLKLISKLGAKHIKDWEHLEEFRRSLCDVAVSLNNCAYYTQLDDAVWEVHKTAPPGSFVYKSLVKYLSDKVLFRSLFIDGSSC.

The interval Phe50 to His458 is methyltransferase. In terms of domain architecture, Alphavirus-like MT spans Thr72–Val281. The (+)RNA virus helicase ATP-binding domain occupies Val801 to Arg963. A helicase region spans residues Leu830–Thr1085. Gly833 to Thr840 serves as a coordination point for ATP. Positions Arg964–Gln1116 constitute a (+)RNA virus helicase C-terminal domain. One can recognise a RdRp catalytic domain in the interval Met1380–Asp1493.

Belongs to the ssRNA positive-strand viruses RNA-directed RNA polymerase family. As to quaternary structure, heterodimer of a large and a small subunit.

It catalyses the reaction RNA(n) + a ribonucleoside 5'-triphosphate = RNA(n+1) + diphosphate. The enzyme catalyses ATP + H2O = ADP + phosphate + H(+). In terms of biological role, is an RNA-dependent RNA polymerase active in viral RNA replication. Functionally, is a methyltransferase active in RNA capping and an RNA helicase. Methyltransferase displays a cytoplasmic capping enzyme activity. This function is necessary since all viral RNAs are synthesized in the cytoplasm, and host capping enzymes are restricted to the nucleus. Helicase region probably exhibits NTPase and RNA unwinding activities (Potential). It also acts as a suppressor of RNA-mediated gene silencing, also known as post-transcriptional gene silencing (PTGS), a mechanism of plant viral defense that limits the accumulation of viral RNAs. May mediate silencing suppression through either inhibition of HEN1-mediated siRNA or siRNA demethylation. The chain is Replicase large subunit from Nicotiana tabacum (Common tobacco).